The chain runs to 485 residues: Glutamyl-tRNA(Gln) amidotransferase subunit A (485 aa).

Catalysis depends on charge relay system residues Lys-78 and Ser-153. Residue Ser-177 is the Acyl-ester intermediate of the active site.

It belongs to the amidase family. GatA subfamily. As to quaternary structure, heterotrimer of A, B and C subunits.

It catalyses the reaction L-glutamyl-tRNA(Gln) + L-glutamine + ATP + H2O = L-glutaminyl-tRNA(Gln) + L-glutamate + ADP + phosphate + H(+). In terms of biological role, allows the formation of correctly charged Gln-tRNA(Gln) through the transamidation of misacylated Glu-tRNA(Gln) in organisms which lack glutaminyl-tRNA synthetase. The reaction takes place in the presence of glutamine and ATP through an activated gamma-phospho-Glu-tRNA(Gln). This is Glutamyl-tRNA(Gln) amidotransferase subunit A from Geobacter sp. (strain M21).